Reading from the N-terminus, the 377-residue chain is Histone deacetylase 8 (377 aa).

Residues 5-336 (RVDVFWHEGM…LHAMLEGVLK (332 aa)) form a histone deacetylase region. Residue H145 is the Proton donor/acceptor of the active site. Zn(2+) is bound by residues D182, H184, and D274.

It belongs to the histone deacetylase family. Zn(2+) is required as a cofactor. As to expression, expressed in stems, leaves, flowers, siliques and mature seeds.

Its subcellular location is the nucleus. It localises to the cytoplasm. The catalysed reaction is N(6)-acetyl-L-lysyl-[histone] + H2O = L-lysyl-[histone] + acetate. In terms of biological role, responsible for the deacetylation of lysine residues on the N-terminal part of the core histones (H2A, H2B, H3 and H4). Histone deacetylation gives a tag for epigenetic repression and plays an important role in transcriptional regulation, cell cycle progression and developmental events. Histone deacetylases act via the formation of large multiprotein complexes. The polypeptide is Histone deacetylase 8 (Arabidopsis thaliana (Mouse-ear cress)).